A 569-amino-acid chain; its full sequence is Putative diguanylate cyclase DgcQ (569 aa).

The next 2 helical transmembrane spans lie at 25–45 (LGPG…STLL) and 365–385 (IALT…WYVI). One can recognise a GGDEF domain in the interval 433–568 (HPFSVIQVDL…GRNRVFASDN (136 aa)). Aspartate 441 contributes to the Mg(2+) binding site. Positions 449, 454, and 458 each coordinate substrate. Glutamate 484 contacts Mg(2+). The active-site Proton acceptor is the glutamate 484.

As to quaternary structure, homodimer. It depends on Mg(2+) as a cofactor.

Its subcellular location is the cell inner membrane. It catalyses the reaction 2 GTP = 3',3'-c-di-GMP + 2 diphosphate. It functions in the pathway glycan metabolism; bacterial cellulose biosynthesis. Its pathway is purine metabolism; 3',5'-cyclic di-GMP biosynthesis. In terms of biological role, catalyzes the synthesis of cyclic-di-GMP (c-di-GMP) via the condensation of 2 GTP molecules. Cyclic-di-GMP is a second messenger which controls cell surface-associated traits in bacteria. Involved in the regulation of cellulose production. This is Putative diguanylate cyclase DgcQ from Shigella flexneri.